Reading from the N-terminus, the 105-residue chain is MPFKEITPQQAWEMMQQGAILVDIRDNMRFAYSHPKGAFHLTNQSFLQFEELADFDSPIIVSCYHGVSSRNVATFLVEQGYKNVFSMIGGFDGWCRAELPIDTTY.

Residues 15–103 (MQQGAILVDI…WCRAELPIDT (89 aa)) form the Rhodanese domain. The active-site Cysteine persulfide intermediate is the Cys-63.

It belongs to the GlpE family.

The protein resides in the cytoplasm. It carries out the reaction thiosulfate + hydrogen cyanide = thiocyanate + sulfite + 2 H(+). It catalyses the reaction thiosulfate + [thioredoxin]-dithiol = [thioredoxin]-disulfide + hydrogen sulfide + sulfite + 2 H(+). Transferase that catalyzes the transfer of sulfur from thiosulfate to thiophilic acceptors such as cyanide or dithiols. May function in a CysM-independent thiosulfate assimilation pathway by catalyzing the conversion of thiosulfate to sulfite, which can then be used for L-cysteine biosynthesis. This chain is Thiosulfate sulfurtransferase GlpE, found in Haemophilus influenzae (strain ATCC 51907 / DSM 11121 / KW20 / Rd).